A 118-amino-acid chain; its full sequence is Eukaryotic translation initiation factor 4E-binding protein 1 (118 aa).

2 stretches are compositionally biased toward polar residues: residues Met-1–Ser-12 and Tyr-34–Gly-48. 2 disordered regions span residues Met-1 to Arg-20 and Asp-25 to Gly-48. Position 2 is an N-acetylserine (Ser-2). Thr-37 is modified (phosphothreonine; by MTOR). Thr-41 bears the Phosphothreonine mark. A Phosphoserine modification is found at Ser-44. The residue at position 46 (Thr-46) is a Phosphothreonine; by MTOR. Thr-50 carries the phosphothreonine modification. Tyr-54 is subject to Phosphotyrosine. The YXXXXLphi motif motif lies at Tyr-54–Met-60. A Glycyl lysine isopeptide (Lys-Gly) (interchain with G-Cter in ubiquitin) cross-link involves residue Lys-57. The segment at Asn-64–Ile-118 is disordered. Ser-65 carries the phosphoserine; by DYRK2, MAPK1, MAPK3 and MTOR modification. Thr-70 carries the phosphothreonine; by MTOR modification. Thr-77 carries the phosphothreonine modification. Phosphoserine occurs at positions 83 and 96. The segment covering Asn-100–Gly-109 has biased composition (basic and acidic residues). The residue at position 101 (Ser-101) is a Phosphoserine; by DYRK2. Position 112 is a phosphoserine (Ser-112). Residues Phe-114–Ile-118 carry the TOS motif motif.

This sequence belongs to the eIF4E-binding protein family. In terms of assembly, hypophosphorylated EIF4EBP1 competes with EIF4G1/EIF4G3 to interact with EIF4E; insulin stimulated MAP-kinase (MAPK1 and MAPK3) or mTORC1 phosphorylation of EIF4EBP1 causes dissociation of the complex allowing EIF4G1/EIF4G3 to bind and consequent initiation of translation. Interacts (via TOS motif) with RPTOR; promoting phosphorylation by mTORC1. In terms of processing, phosphorylated on serine and threonine residues in response to insulin, EGF and PDGF. Phosphorylation at Thr-37, Thr-46, Ser-65 and Thr-70, corresponding to the hyperphosphorylated form, is regulated by mTORC1 and abolishes binding to EIF4E. Ubiquitinated: when eIF4E levels are low, hypophosphorylated form is ubiquitinated by the BCR(KLHL25) complex, leading to its degradation and serving as a homeostatic mechanism to maintain translation and prevent eIF4E inhibition when eIF4E levels are low. Not ubiquitinated when hyperphosphorylated (at Thr-37, Thr-46, Ser-65 and Thr-70) or associated with eIF4E.

It is found in the cytoplasm. Its subcellular location is the nucleus. Its function is as follows. Repressor of translation initiation that regulates EIF4E activity by preventing its assembly into the eIF4F complex: hypophosphorylated form competes with EIF4G1/EIF4G3 and strongly binds to EIF4E, leading to repress translation. In contrast, hyperphosphorylated form dissociates from EIF4E, allowing interaction between EIF4G1/EIF4G3 and EIF4E, leading to initiation of translation. Mediates the regulation of protein translation by hormones, growth factors and other stimuli that signal through the MAP kinase and mTORC1 pathways. In Homo sapiens (Human), this protein is Eukaryotic translation initiation factor 4E-binding protein 1 (EIF4EBP1).